Reading from the N-terminus, the 248-residue chain is Adenosylcobinamide-GDP ribazoletransferase (248 aa).

The next 7 helical transmembrane spans lie at 24–44 (EINL…IGAW), 70–90 (VIIT…GLFS), 106–126 (VGAN…ALFL), 134–154 (ICWL…LLFA), 168–188 (IFLG…LAVL), 189–209 (GLFF…FTII), and 228–248 (AGGQ…WGLV).

It belongs to the CobS family. Mg(2+) is required as a cofactor.

It localises to the cell membrane. It catalyses the reaction alpha-ribazole + adenosylcob(III)inamide-GDP = adenosylcob(III)alamin + GMP + H(+). The catalysed reaction is alpha-ribazole 5'-phosphate + adenosylcob(III)inamide-GDP = adenosylcob(III)alamin 5'-phosphate + GMP + H(+). It functions in the pathway cofactor biosynthesis; adenosylcobalamin biosynthesis; adenosylcobalamin from cob(II)yrinate a,c-diamide: step 7/7. Joins adenosylcobinamide-GDP and alpha-ribazole to generate adenosylcobalamin (Ado-cobalamin). Also synthesizes adenosylcobalamin 5'-phosphate from adenosylcobinamide-GDP and alpha-ribazole 5'-phosphate. This Listeria monocytogenes serovar 1/2a (strain ATCC BAA-679 / EGD-e) protein is Adenosylcobinamide-GDP ribazoletransferase.